Reading from the N-terminus, the 563-residue chain is Pyruvate decarboxylase isozyme 3 (563 aa).

An N-acetylserine modification is found at Ser2. Asp28 and His115 together coordinate pyruvate. Lys212 is covalently cross-linked (Glycyl lysine isopeptide (Lys-Gly) (interchain with G-Cter in ubiquitin)). Residue Ser223 is modified to Phosphoserine. A Glycyl lysine isopeptide (Lys-Gly) (interchain with G-Cter in ubiquitin) cross-link involves residue Lys233. Thr266 carries the phosphothreonine modification. Lys269 is covalently cross-linked (Glycyl lysine isopeptide (Lys-Gly) (interchain with G-Cter in ubiquitin)). Thr353 is subject to Phosphothreonine. Thiamine diphosphate-binding positions include Thr390 and 413–415 (GSI). Asp444 is a Mg(2+) binding site. Residues 445 to 446 (GS) and 471 to 476 (NDGYTI) each bind thiamine diphosphate. Mg(2+) contacts are provided by Asn471 and Gly473. Pyruvate is bound at residue Glu477. Residue Lys505 forms a Glycyl lysine isopeptide (Lys-Gly) (interchain with G-Cter in ubiquitin) linkage. Residue Thr522 is modified to Phosphothreonine.

This sequence belongs to the TPP enzyme family. As to quaternary structure, homotetramer. The cofactor is Mg(2+). Thiamine diphosphate is required as a cofactor.

Its subcellular location is the cytoplasm. The catalysed reaction is pyruvate + H(+) = acetaldehyde + CO2. It catalyses the reaction 3-methyl-2-oxobutanoate + H(+) = 2-methylpropanal + CO2. The enzyme catalyses (S)-3-methyl-2-oxopentanoate + H(+) = 2-methylbutanal + CO2. It carries out the reaction indole-3-pyruvate + H(+) = indole-3-acetaldehyde + CO2. The catalysed reaction is 3-phenylpyruvate + H(+) = 2-phenylacetaldehyde + CO2. It catalyses the reaction 2-oxobutanoate + H(+) = propanal + CO2. The enzyme catalyses 2-oxopentanoate + H(+) = butanal + CO2. It carries out the reaction 2 acetaldehyde = acetoin. The catalysed reaction is acetaldehyde + pyruvate + H(+) = acetoin + CO2. Its pathway is fermentation; ethanol fermentation. It functions in the pathway amino-acid degradation; Ehrlich pathway. Functionally, minor of three pyruvate decarboxylases (PDC1, PDC5, PDC6) implicated in the nonoxidative conversion of pyruvate to acetaldehyde and carbon dioxide during alcoholic fermentation. Most of the produced acetaldehyde is subsequently reduced to ethanol, but some is required for cytosolic acetyl-CoA production for biosynthetic pathways. The enzyme is also one of five 2-oxo acid decarboxylases (PDC1, PDC5, PDC6, ARO10, and THI3) able to decarboxylate more complex 2-oxo acids (alpha-keto-acids) than pyruvate, which seem mainly involved in amino acid catabolism. Here the enzyme catalyzes the decarboxylation of amino acids, which, in a first step, have been transaminated to the corresponding 2-oxo acids. In a third step, the resulting aldehydes are reduced to alcohols, collectively referred to as fusel oils or alcohols. Its preferred substrates are the transaminated amino acids derived from threonine (2-oxobutanoate), norvaline (2-oxopentanoate), valine (3-methyl-2-oxobutanoate, also alpha-keto-isovalerate), isoleucine ((3S)-3-methyl-2-oxopentanoate, also alpha-keto-beta-methylvalerate), phenylalanine (phenylpyruvate), and tryptophan (3-(indol-3-yl)pyruvate), whereas transaminated leucine is no substrate. In a side-reaction the carbanionic intermediate (or active aldehyde) generated by decarboxylation or by activation of an aldehyde can react with an aldehyde via condensation (or carboligation) yielding a 2-hydroxy ketone, collectively called acyloins. The expression level of this protein in the presence of fermentable carbon sources is so low that it cannot compensate for the other two pyruvate decarboxylases to sustain fermentation. In Saccharomyces cerevisiae (strain ATCC 204508 / S288c) (Baker's yeast), this protein is Pyruvate decarboxylase isozyme 3 (PDC6).